We begin with the raw amino-acid sequence, 335 residues long: 2-acylglycerol O-acyltransferase 1 (335 aa).

A run of 2 helical transmembrane segments spans residues 24–44 (WVFS…SLVL) and 47–67 (LWLI…TPQA). N-linked (GlcNAc...) asparagine glycans are attached at residues N77, N125, and N180.

The protein belongs to the diacylglycerol acyltransferase family.

It localises to the endoplasmic reticulum membrane. The enzyme catalyses a 2-acylglycerol + an acyl-CoA = a 1,2-diacylglycerol + CoA. It carries out the reaction a 2-acylglycerol + an acyl-CoA = a 1,2-diacyl-sn-glycerol + CoA. The catalysed reaction is a 2-acylglycerol + an acyl-CoA = a 2,3-diacyl-sn-glycerol + CoA. It catalyses the reaction a 1-acylglycerol + an acyl-CoA = a 1,2-diacylglycerol + CoA. The enzyme catalyses a 1-acylglycerol + an acyl-CoA = a 1,3-diacylglycerol + CoA. It carries out the reaction a 1-acyl-sn-glycerol + an acyl-CoA = a 1,3-diacyl-sn-glycerol + CoA. The catalysed reaction is a 3-acyl-sn-glycerol + an acyl-CoA = a 1,3-diacyl-sn-glycerol + CoA. It functions in the pathway glycerolipid metabolism; triacylglycerol biosynthesis. Involved in glycerolipid synthesis and lipid metabolism. Catalyzes the formation of diacylglycerol, the precursor of triacylglycerol, by transferring the acyl chain of a fatty acyl-CoA to a monoacylglycerol, mainly at the sn-1 or sn-3 positions. It uses both sn-2-monoacylglycerol (2-acylglycerol) and sn-1-monoacylglycerol (1-acyl-sn-glycerol) equally well as substrates, and uses sn-3-monoacylglycerol (3-acyl-sn-glycerol) with lower efficiency. In Xenopus tropicalis (Western clawed frog), this protein is 2-acylglycerol O-acyltransferase 1 (mogat1).